Here is a 270-residue protein sequence, read N- to C-terminus: Large ribosomal subunit protein bL21m (270 aa).

The transit peptide at 1 to 68 (MASLRCFREL…HWYRSQDRCF (68 aa)) directs the protein to the mitochondrion. The tract at residues 68 to 113 (FSSNTKDTDEDEESSEGEDDDEEEGEDFEDSADMEVEREYSPAEKV) is disordered. A compositionally biased stretch (acidic residues) spans 75 to 101 (TDEDEESSEGEDDDEEEGEDFEDSADM). The segment covering 102-113 (EVEREYSPAEKV) has biased composition (basic and acidic residues).

It belongs to the bacterial ribosomal protein bL21 family. Component of the mitochondrial ribosome large subunit. As to expression, constitutively expressed in roots, stems, leaves, flowers, pistils and siliques.

The protein resides in the mitochondrion. In terms of biological role, this protein binds to 23S ribosomal RNA in the presence of protein L20. Required for karyogamy during female gametophyte development, when the two polar nuclei fuse to form the diploid central cell nucleus, and during double fertilization of the egg cell and the central cell. This is Large ribosomal subunit protein bL21m from Arabidopsis thaliana (Mouse-ear cress).